The following is a 238-amino-acid chain: Sugar fermentation stimulation protein homolog (238 aa).

The protein belongs to the SfsA family.

This Klebsiella pneumoniae subsp. pneumoniae (strain ATCC 700721 / MGH 78578) protein is Sugar fermentation stimulation protein homolog.